The following is a 406-amino-acid chain: Argininosuccinate synthase (406 aa).

An ATP-binding site is contributed by alanine 8 to serine 16. Tyrosine 86 contacts L-citrulline. Glycine 116 is an ATP binding site. 3 residues coordinate L-aspartate: threonine 118, asparagine 122, and aspartate 123. Asparagine 122 contributes to the L-citrulline binding site. L-citrulline contacts are provided by arginine 126, serine 174, serine 183, glutamate 259, and tyrosine 271.

The protein belongs to the argininosuccinate synthase family. Type 1 subfamily. In terms of assembly, homotetramer.

The protein resides in the cytoplasm. It carries out the reaction L-citrulline + L-aspartate + ATP = 2-(N(omega)-L-arginino)succinate + AMP + diphosphate + H(+). It participates in amino-acid biosynthesis; L-arginine biosynthesis; L-arginine from L-ornithine and carbamoyl phosphate: step 2/3. The polypeptide is Argininosuccinate synthase (Oenococcus oeni (strain ATCC BAA-331 / PSU-1)).